Here is a 418-residue protein sequence, read N- to C-terminus: Serine hydroxymethyltransferase (418 aa).

Residues Leu121 and 125 to 127 (GHL) each bind (6S)-5,6,7,8-tetrahydrofolate. Residue Lys230 is modified to N6-(pyridoxal phosphate)lysine. Residues Glu246 and 355-357 (SPF) each bind (6S)-5,6,7,8-tetrahydrofolate.

It belongs to the SHMT family. Homodimer. Pyridoxal 5'-phosphate is required as a cofactor.

The protein resides in the cytoplasm. It carries out the reaction (6R)-5,10-methylene-5,6,7,8-tetrahydrofolate + glycine + H2O = (6S)-5,6,7,8-tetrahydrofolate + L-serine. It functions in the pathway one-carbon metabolism; tetrahydrofolate interconversion. The protein operates within amino-acid biosynthesis; glycine biosynthesis; glycine from L-serine: step 1/1. Functionally, catalyzes the reversible interconversion of serine and glycine with tetrahydrofolate (THF) serving as the one-carbon carrier. This reaction serves as the major source of one-carbon groups required for the biosynthesis of purines, thymidylate, methionine, and other important biomolecules. Also exhibits THF-independent aldolase activity toward beta-hydroxyamino acids, producing glycine and aldehydes, via a retro-aldol mechanism. The sequence is that of Serine hydroxymethyltransferase from Streptococcus pneumoniae serotype 4 (strain ATCC BAA-334 / TIGR4).